The chain runs to 188 residues: Oleosin S2-2 (188 aa).

Ala2 is subject to N-acetylalanine. The polar stretch occupies residues 2–51 (ATVERRVQVDPTDKRIHLQPQYEGDVGYGYGYGGRADYKSSGPSSNQIVA). 3 helical membrane passes run 49–69 (IVAL…AGLT), 74–94 (VIGL…IVPA), and 96–116 (ITIG…LTGL). The hydrophobic stretch occupies residues 52 to 125 (LIVGVPVGGS…LSSVSWVLNY (74 aa)). Residues 164 to 188 (DKAHEAHDTSLTTETTEPGKTRRHT) form a disordered region. The segment covering 172-181 (TSLTTETTEP) has biased composition (polar residues).

It belongs to the oleosin family.

The protein localises to the lipid droplet. Its subcellular location is the membrane. In terms of biological role, may have a structural role to stabilize the lipid body during desiccation of the seed by preventing coalescence of the oil. Probably interacts with both lipid and phospholipid moieties of lipid bodies. May also provide recognition signals for specific lipase anchorage in lipolysis during seedling growth. This is Oleosin S2-2 (S2) from Brassica napus (Rape).